The following is an 801-amino-acid chain: Cation/H(+) antiporter 7 (801 aa).

The next 13 helical transmembrane spans lie at 58-78, 83-103, 128-148, 154-174, 192-212, 223-243, 254-274, 287-307, 312-332, 340-360, 377-397, 407-427, and 438-458; these read PNLE…EILF, IPIP…LFSY, GAFG…VGML, RAAL…YILM, EIIL…LTDL, VQSC…GTVL, IVIV…MLWI, VYIY…LNFF, YGWF…SALI, VGVL…ISWL, AISV…ITAF, IVLA…LGYI, and FTIA…AIEF.

This sequence belongs to the monovalent cation:proton antiporter 2 (CPA2) transporter (TC 2.A.37) family. CHX (TC 2.A.37.4) subfamily. In terms of tissue distribution, expressed in pollen.

It is found in the membrane. Its function is as follows. May operate as a cation/H(+) antiporter. The polypeptide is Cation/H(+) antiporter 7 (CHX7) (Arabidopsis thaliana (Mouse-ear cress)).